The sequence spans 274 residues: Acetyl-coenzyme A carboxylase carboxyl transferase subunit alpha (274 aa).

Residues 1 to 245 (MENSQELTPW…RENLKKAIEG (245 aa)) enclose the CoA carboxyltransferase C-terminal domain.

The protein belongs to the AccA family. In terms of assembly, acetyl-CoA carboxylase is a heterohexamer composed of biotin carboxyl carrier protein (AccB), biotin carboxylase (AccC) and two subunits each of ACCase subunit alpha (AccA) and ACCase subunit beta (AccD).

The protein localises to the cytoplasm. It carries out the reaction N(6)-carboxybiotinyl-L-lysyl-[protein] + acetyl-CoA = N(6)-biotinyl-L-lysyl-[protein] + malonyl-CoA. It participates in lipid metabolism; malonyl-CoA biosynthesis; malonyl-CoA from acetyl-CoA: step 1/1. Functionally, component of the acetyl coenzyme A carboxylase (ACC) complex. First, biotin carboxylase catalyzes the carboxylation of biotin on its carrier protein (BCCP) and then the CO(2) group is transferred by the carboxyltransferase to acetyl-CoA to form malonyl-CoA. The protein is Acetyl-coenzyme A carboxylase carboxyl transferase subunit alpha of Clostridium acetobutylicum (strain ATCC 824 / DSM 792 / JCM 1419 / IAM 19013 / LMG 5710 / NBRC 13948 / NRRL B-527 / VKM B-1787 / 2291 / W).